Reading from the N-terminus, the 87-residue chain is uncharacterized protein (87 aa).

The disordered stretch occupies residues 67 to 87 (TGGDPREAVVRPADQVEGYTG).

This is an uncharacterized protein from Mycobacterium bovis (strain ATCC BAA-935 / AF2122/97).